The following is a 235-amino-acid chain: 2-C-methyl-D-erythritol 4-phosphate cytidylyltransferase (235 aa).

It belongs to the IspD/TarI cytidylyltransferase family. IspD subfamily.

It catalyses the reaction 2-C-methyl-D-erythritol 4-phosphate + CTP + H(+) = 4-CDP-2-C-methyl-D-erythritol + diphosphate. It participates in isoprenoid biosynthesis; isopentenyl diphosphate biosynthesis via DXP pathway; isopentenyl diphosphate from 1-deoxy-D-xylulose 5-phosphate: step 2/6. Its function is as follows. Catalyzes the formation of 4-diphosphocytidyl-2-C-methyl-D-erythritol from CTP and 2-C-methyl-D-erythritol 4-phosphate (MEP). The protein is 2-C-methyl-D-erythritol 4-phosphate cytidylyltransferase of Pseudomonas putida (strain ATCC 47054 / DSM 6125 / CFBP 8728 / NCIMB 11950 / KT2440).